The primary structure comprises 1463 residues: DNA polymerase III PolC-type (1463 aa).

An Exonuclease domain is found at 425 to 581; that stretch reads YVVFDVETTG…YDAEATGRLL (157 aa).

This sequence belongs to the DNA polymerase type-C family. PolC subfamily.

It is found in the cytoplasm. It carries out the reaction DNA(n) + a 2'-deoxyribonucleoside 5'-triphosphate = DNA(n+1) + diphosphate. In terms of biological role, required for replicative DNA synthesis. This DNA polymerase also exhibits 3' to 5' exonuclease activity. This chain is DNA polymerase III PolC-type, found in Streptococcus pneumoniae serotype 2 (strain D39 / NCTC 7466).